The primary structure comprises 152 residues: Conglutin delta 1 (152 aa).

An N-terminal signal peptide occupies residues 1 to 22; it reads MAKLTILIALVAALVLVVHTSA. Disulfide bonds link C30/C101, C42/C89, C90/C137, and C103/C145.

Belongs to the 2S seed storage albumins family. As to quaternary structure, heterodimer of a small chain and a large chain; disulfide-linked. Expressed in developing cotyledons and in the embryonic axis of germinating seeds.

It is found in the endoplasmic reticulum. The polypeptide is Conglutin delta 1 (Lupinus angustifolius (Narrow-leaved blue lupine)).